Here is a 156-residue protein sequence, read N- to C-terminus: Small ribosomal subunit protein uS7 (156 aa).

It belongs to the universal ribosomal protein uS7 family. In terms of assembly, part of the 30S ribosomal subunit. Contacts proteins S9 and S11.

Its function is as follows. One of the primary rRNA binding proteins, it binds directly to 16S rRNA where it nucleates assembly of the head domain of the 30S subunit. Is located at the subunit interface close to the decoding center, probably blocks exit of the E-site tRNA. This Pseudomonas syringae pv. tomato (strain ATCC BAA-871 / DC3000) protein is Small ribosomal subunit protein uS7.